Consider the following 398-residue polypeptide: S-adenosylmethionine synthase (398 aa).

Histidine 15 is an ATP binding site. Position 17 (aspartate 17) interacts with Mg(2+). K(+) is bound at residue glutamate 43. The L-methionine site is built by glutamate 56 and glutamine 99. Residues 99 to 109 are flexible loop; it reads QSPDIAQGVDT. Residues 175–177, 243–244, aspartate 252, 258–259, alanine 275, and lysine 279 contribute to the ATP site; these read DGK, RF, and RK. Aspartate 252 contributes to the L-methionine binding site. L-methionine is bound at residue lysine 283.

Belongs to the AdoMet synthase family. Homotetramer; dimer of dimers. Mg(2+) is required as a cofactor. K(+) serves as cofactor.

The protein localises to the cytoplasm. The enzyme catalyses L-methionine + ATP + H2O = S-adenosyl-L-methionine + phosphate + diphosphate. The protein operates within amino-acid biosynthesis; S-adenosyl-L-methionine biosynthesis; S-adenosyl-L-methionine from L-methionine: step 1/1. Functionally, catalyzes the formation of S-adenosylmethionine (AdoMet) from methionine and ATP. The overall synthetic reaction is composed of two sequential steps, AdoMet formation and the subsequent tripolyphosphate hydrolysis which occurs prior to release of AdoMet from the enzyme. In Parafrankia sp. (strain EAN1pec), this protein is S-adenosylmethionine synthase.